Reading from the N-terminus, the 210-residue chain is MTNLNYQQTHFVMSAPDIRHLPSDTGIEVAFAGRSNAGKSSALNTLTNQKSLARTSKTPGRTQLINLFEVADGKRLVDLPGYGYAEVPEEMKRKWQRALGEYLEKRHSLQGLVVLMDIRHPLKDLDQQMIEWAVDSNIAVLVLLTKADKLASGARKAQLNMVREAVLAFNGDVQVETFSSLKKQGVDKLRQKLDTWFSEMQPVEETQDGE.

The 175-residue stretch at 25–199 folds into the EngB-type G domain; the sequence is TGIEVAFAGR…RQKLDTWFSE (175 aa). GTP-binding positions include 33 to 40, 60 to 64, 78 to 81, 145 to 148, and 178 to 180; these read GRSNAGKS, GRTQL, DLPG, TKAD, and FSS. Mg(2+) contacts are provided by S40 and T62.

This sequence belongs to the TRAFAC class TrmE-Era-EngA-EngB-Septin-like GTPase superfamily. EngB GTPase family. Mg(2+) is required as a cofactor.

Necessary for normal cell division and for the maintenance of normal septation. This Shigella boydii serotype 4 (strain Sb227) protein is Probable GTP-binding protein EngB.